The primary structure comprises 117 residues: Large ribosomal subunit protein bL20 (117 aa).

It belongs to the bacterial ribosomal protein bL20 family.

Binds directly to 23S ribosomal RNA and is necessary for the in vitro assembly process of the 50S ribosomal subunit. It is not involved in the protein synthesizing functions of that subunit. The sequence is that of Large ribosomal subunit protein bL20 from Pelotomaculum thermopropionicum (strain DSM 13744 / JCM 10971 / SI).